The following is a 274-amino-acid chain: Large ribosomal subunit protein uL2 (274 aa).

Disordered stretches follow at residues Ala-28–Ile-54 and Val-224–Lys-274. The segment covering Lys-263–Lys-274 has biased composition (basic and acidic residues).

This sequence belongs to the universal ribosomal protein uL2 family. Part of the 50S ribosomal subunit. Forms a bridge to the 30S subunit in the 70S ribosome.

One of the primary rRNA binding proteins. Required for association of the 30S and 50S subunits to form the 70S ribosome, for tRNA binding and peptide bond formation. It has been suggested to have peptidyltransferase activity; this is somewhat controversial. Makes several contacts with the 16S rRNA in the 70S ribosome. In Pseudomonas savastanoi pv. phaseolicola (strain 1448A / Race 6) (Pseudomonas syringae pv. phaseolicola (strain 1448A / Race 6)), this protein is Large ribosomal subunit protein uL2.